Here is a 288-residue protein sequence, read N- to C-terminus: Bifunctional protein FolD (288 aa).

Residues 165-167 and Ser190 contribute to the NADP(+) site; that span reads GRS.

This sequence belongs to the tetrahydrofolate dehydrogenase/cyclohydrolase family. In terms of assembly, homodimer.

The enzyme catalyses (6R)-5,10-methylene-5,6,7,8-tetrahydrofolate + NADP(+) = (6R)-5,10-methenyltetrahydrofolate + NADPH. It catalyses the reaction (6R)-5,10-methenyltetrahydrofolate + H2O = (6R)-10-formyltetrahydrofolate + H(+). The protein operates within one-carbon metabolism; tetrahydrofolate interconversion. Its function is as follows. Catalyzes the oxidation of 5,10-methylenetetrahydrofolate to 5,10-methenyltetrahydrofolate and then the hydrolysis of 5,10-methenyltetrahydrofolate to 10-formyltetrahydrofolate. The protein is Bifunctional protein FolD of Bdellovibrio bacteriovorus (strain ATCC 15356 / DSM 50701 / NCIMB 9529 / HD100).